The following is a 435-amino-acid chain: Xylose isomerase (435 aa).

Catalysis depends on residues His100 and Asp103. Mg(2+) is bound by residues Glu231, Glu267, His270, Asp295, Asp306, Asp308, and Asp338.

This sequence belongs to the xylose isomerase family. As to quaternary structure, homotetramer. It depends on Mg(2+) as a cofactor.

The protein localises to the cytoplasm. The catalysed reaction is alpha-D-xylose = alpha-D-xylulofuranose. This is Xylose isomerase from Brucella suis (strain ATCC 23445 / NCTC 10510).